The sequence spans 361 residues: POU domain, class 3, transcription factor 4-A (361 aa).

Disordered regions lie at residues 100 to 131, 150 to 189, and 333 to 361; these read HVNHHSPHTNHPNAWGASPAHNSSLTSSGQPI, LTPPLPAGTTQSLHPVLREPNDHVDLGSHHCQDHSDEETP, and EKRMTPPGDPQQHEVYSHSVKTDTSCNEL. Positions 119-131 are enriched in polar residues; the sequence is AHNSSLTSSGQPI. Residues 165–183 are compositionally biased toward basic and acidic residues; the sequence is VLREPNDHVDLGSHHCQDH. The 75-residue stretch at 186-260 folds into the POU-specific domain; the sequence is EETPTSDELE…LLNKWLEEAD (75 aa). A DNA-binding region (homeobox) is located at residues 278–337; sequence KRKKRTSIEVSVKGVLETHFLKCPKPAALEITSLADSLQLEKEVVRVWFCNRRQKEKRMT.

This sequence belongs to the POU transcription factor family. Class-3 subfamily. From embryonic stage 10, expressed in the Spemann's organizer. During gastrulation, expressed in both the involuting mesoderm and the overlying neuroectoderm. During the neural plate and neural fold stages, expressed in the entire neuroectoderm with expression in discrete regions of the developing nervous system persisting at later stages. Transiently expressed in the pronephros from stages 24-32. In adults, expressed in the kidney and brain.

Its subcellular location is the nucleus. Functionally, transcriptional activator. Induces neural-specific gene expression to act as a key regulator of neural differentiation. The polypeptide is POU domain, class 3, transcription factor 4-A (pou3f4-a) (Xenopus laevis (African clawed frog)).